Here is a 155-residue protein sequence, read N- to C-terminus: Ribosome maturation factor RimP (155 aa).

The protein belongs to the RimP family.

The protein resides in the cytoplasm. In terms of biological role, required for maturation of 30S ribosomal subunits. The protein is Ribosome maturation factor RimP of Phocaeicola vulgatus (strain ATCC 8482 / DSM 1447 / JCM 5826 / CCUG 4940 / NBRC 14291 / NCTC 11154) (Bacteroides vulgatus).